Reading from the N-terminus, the 159-residue chain is Ribosomal RNA large subunit methyltransferase H (159 aa).

Residues Leu76 and Gly108 each coordinate S-adenosyl-L-methionine.

The protein belongs to the RNA methyltransferase RlmH family. As to quaternary structure, homodimer.

The protein resides in the cytoplasm. The enzyme catalyses pseudouridine(1915) in 23S rRNA + S-adenosyl-L-methionine = N(3)-methylpseudouridine(1915) in 23S rRNA + S-adenosyl-L-homocysteine + H(+). Functionally, specifically methylates the pseudouridine at position 1915 (m3Psi1915) in 23S rRNA. This is Ribosomal RNA large subunit methyltransferase H from Levilactobacillus brevis (strain ATCC 367 / BCRC 12310 / CIP 105137 / JCM 1170 / LMG 11437 / NCIMB 947 / NCTC 947) (Lactobacillus brevis).